The following is a 321-amino-acid chain: Peptidase 1 (321 aa).

The N-terminal stretch at 1–18 (MKIILAIASLLVLSAVYA) is a signal peptide. A propeptide spanning residues 19–98 (RPASIKTFEE…LKTQFDLNAE (80 aa)) is cleaved from the precursor. N34 carries N-linked (GlcNAc...) asparagine glycosylation. C130 and C170 form a disulfide bridge. The active site involves C133. N151 carries N-linked (GlcNAc...) asparagine glycosylation. Catalysis depends on residues H269 and N289.

The protein belongs to the peptidase C1 family.

The protein localises to the secreted. The catalysed reaction is Broad endopeptidase specificity.. In terms of biological role, probable thiol protease. The polypeptide is Peptidase 1 (EURM1) (Euroglyphus maynei (Mayne's house dust mite)).